The primary structure comprises 249 residues: Ubiquinone biosynthesis O-methyltransferase (249 aa).

4 residues coordinate S-adenosyl-L-methionine: R44, G75, D96, and M138.

It belongs to the methyltransferase superfamily. UbiG/COQ3 family.

The enzyme catalyses a 3-demethylubiquinol + S-adenosyl-L-methionine = a ubiquinol + S-adenosyl-L-homocysteine + H(+). It carries out the reaction a 3-(all-trans-polyprenyl)benzene-1,2-diol + S-adenosyl-L-methionine = a 2-methoxy-6-(all-trans-polyprenyl)phenol + S-adenosyl-L-homocysteine + H(+). The protein operates within cofactor biosynthesis; ubiquinone biosynthesis. Functionally, O-methyltransferase that catalyzes the 2 O-methylation steps in the ubiquinone biosynthetic pathway. The sequence is that of Ubiquinone biosynthesis O-methyltransferase from Paramagnetospirillum magneticum (strain ATCC 700264 / AMB-1) (Magnetospirillum magneticum).